The chain runs to 130 residues: Small ribosomal subunit protein uS12c (130 aa).

It belongs to the universal ribosomal protein uS12 family. As to quaternary structure, part of the 30S ribosomal subunit.

It localises to the plastid. It is found in the chloroplast. In terms of biological role, with S4 and S5 plays an important role in translational accuracy. Located at the interface of the 30S and 50S subunits. The chain is Small ribosomal subunit protein uS12c (rps12) from Tetradesmus obliquus (Green alga).